We begin with the raw amino-acid sequence, 219 residues long: Leucyl/phenylalanyl-tRNA--protein transferase (219 aa).

Belongs to the L/F-transferase family.

Its subcellular location is the cytoplasm. It catalyses the reaction N-terminal L-lysyl-[protein] + L-leucyl-tRNA(Leu) = N-terminal L-leucyl-L-lysyl-[protein] + tRNA(Leu) + H(+). The enzyme catalyses N-terminal L-arginyl-[protein] + L-leucyl-tRNA(Leu) = N-terminal L-leucyl-L-arginyl-[protein] + tRNA(Leu) + H(+). It carries out the reaction L-phenylalanyl-tRNA(Phe) + an N-terminal L-alpha-aminoacyl-[protein] = an N-terminal L-phenylalanyl-L-alpha-aminoacyl-[protein] + tRNA(Phe). Functionally, functions in the N-end rule pathway of protein degradation where it conjugates Leu, Phe and, less efficiently, Met from aminoacyl-tRNAs to the N-termini of proteins containing an N-terminal arginine or lysine. The sequence is that of Leucyl/phenylalanyl-tRNA--protein transferase from Leptospira interrogans serogroup Icterohaemorrhagiae serovar copenhageni (strain Fiocruz L1-130).